The primary structure comprises 619 residues: Zinc finger CCCH domain-containing protein 67 (619 aa).

2 ANK repeats span residues 52-81 (EPLTPLMVAAVYGSVGCLDALLSPPYLVDP) and 88-120 (SLSTPLHLAAAGGSASAPAAVSRLLAAGADPAL). 2 C3H1-type zinc fingers span residues 213 to 241 (HYSCVPCPEFKKGAGCRRGDMCEYAHGVF) and 249 to 273 (QYRTRLCKDGVGCARRVCFFAHTPD). The tract at residues 308–341 (SPGSSSFTPPLSPSAGGGGGGGGGSGGGGAWPQQ) is disordered. A compositionally biased stretch (gly residues) spans 322 to 337 (AGGGGGGGGGSGGGGA).

The protein is Zinc finger CCCH domain-containing protein 67 of Oryza sativa subsp. japonica (Rice).